The primary structure comprises 225 residues: Cytidylate kinase (225 aa).

12–20 (GPSGAGKGT) is an ATP binding site.

The protein belongs to the cytidylate kinase family. Type 1 subfamily.

The protein resides in the cytoplasm. It catalyses the reaction CMP + ATP = CDP + ADP. The enzyme catalyses dCMP + ATP = dCDP + ADP. This Proteus mirabilis (strain HI4320) protein is Cytidylate kinase.